The following is a 223-amino-acid chain: Glutathione S-transferase Z2 (223 aa).

The GST N-terminal domain maps to 10 to 91 (AKLKLYSYWR…YLDDKYPEPP (82 aa)). Glutathione contacts are provided by residues 20 to 21 (SS), 20 to 25 (SSCAHR), Gln49, 49 to 50 (QS), 62 to 63 (TV), Val63, 75 to 76 (DS), Gln115, and 119 to 121 (NMA). The GST C-terminal domain occupies 96–221 (DYHKRAVNYQ…VPEKQPDTPS (126 aa)).

The protein belongs to the GST superfamily. Zeta family.

It is found in the cytoplasm. The protein resides in the cytosol. It carries out the reaction RX + glutathione = an S-substituted glutathione + a halide anion + H(+). In terms of biological role, may be involved in the conjugation of reduced glutathione to a wide number of exogenous and endogenous hydrophobic electrophiles and have a detoxification role against certain herbicides. The sequence is that of Glutathione S-transferase Z2 (GSTZ2) from Arabidopsis thaliana (Mouse-ear cress).